We begin with the raw amino-acid sequence, 303 residues long: Acetaldehyde dehydrogenase (303 aa).

13–16 (SGNI) is an NAD(+) binding site. Cys-128 (acyl-thioester intermediate) is an active-site residue. NAD(+) contacts are provided by residues 159–167 (SAGPGTRQN) and Asn-278.

The protein belongs to the acetaldehyde dehydrogenase family.

The enzyme catalyses acetaldehyde + NAD(+) + CoA = acetyl-CoA + NADH + H(+). This Chloroflexus aggregans (strain MD-66 / DSM 9485) protein is Acetaldehyde dehydrogenase.